The following is a 367-amino-acid chain: Alginate lyase (367 aa).

Residues 1 to 24 (MTIFKRISSPALLALALFGGAAHA) form the signal peptide. Substrate is bound by residues 63–64 (SK), 136–137 (HT), and Tyr254.

The protein belongs to the polysaccharide lyase 5 family.

It is found in the periplasm. The catalysed reaction is Eliminative cleavage of alginate to give oligosaccharides with 4-deoxy-alpha-L-erythro-hex-4-enuronosyl groups at their non-reducing ends and beta-D-mannuronate at their reducing end.. Its function is as follows. Catalyzes the depolymerization of alginate by cleaving the beta-1,4 glycosidic bond between two adjacent sugar residues via a beta-elimination mechanism. May serve to degrade mislocalized alginate that is trapped in the periplasmic space. The protein is Alginate lyase of Pseudomonas putida (strain ATCC 700007 / DSM 6899 / JCM 31910 / BCRC 17059 / LMG 24140 / F1).